The sequence spans 268 residues: NAD kinase (268 aa).

Asp45 functions as the Proton acceptor in the catalytic mechanism. NAD(+) contacts are provided by residues 45 to 46 (DG), 122 to 123 (NE), Arg148, Asp150, 161 to 166 (TAYGKS), Ala185, and Gln223.

The protein belongs to the NAD kinase family. A divalent metal cation is required as a cofactor.

Its subcellular location is the cytoplasm. The catalysed reaction is NAD(+) + ATP = ADP + NADP(+) + H(+). Involved in the regulation of the intracellular balance of NAD and NADP, and is a key enzyme in the biosynthesis of NADP. Catalyzes specifically the phosphorylation on 2'-hydroxyl of the adenosine moiety of NAD to yield NADP. This chain is NAD kinase, found in Latilactobacillus sakei subsp. sakei (strain 23K) (Lactobacillus sakei subsp. sakei).